The primary structure comprises 780 residues: Probable trehalase (780 aa).

The interval 1 to 48 is disordered; sequence MVDFLPKVTEINPPSEGNDGEDNIKPLSSGSEQRPLKEEGQQGGRRHH. Phosphoserine occurs at positions 52 and 53. Thr-88 bears the Phosphothreonine mark. Position 112 is a phosphoserine (Ser-112). Residues Arg-331, 338 to 339, Asn-375, Arg-384, 384 to 386, and Gly-505 each bind substrate; these read WD and RSQ. Active-site proton donor/acceptor residues include Asp-507 and Glu-703.

It belongs to the glycosyl hydrolase 37 family.

It catalyses the reaction alpha,alpha-trehalose + H2O = alpha-D-glucose + beta-D-glucose. The chain is Probable trehalase (NTH2) from Saccharomyces cerevisiae (strain ATCC 204508 / S288c) (Baker's yeast).